A 350-amino-acid polypeptide reads, in one-letter code: MNFNKIKSMHFPSDVYIGHDAILNIGSVVSKFLKSGEVLLITGENTYNIAGKKVLSNLNDFDVNVIIASRATRDSIKSIEESLKNRRSGIVLGVGGGSKIDIAKKIAYDLGIPFISVPTTPSHDGIASPRASIYDGKSVYSEEATMPSAIVADTSIMVLAPYRYVAAGAADVISNITAVLDWKLANRLKGEEFSSTAAVMSEYAGRELIERSSMIQPGLEESIWLVTKQILASGAAMAIAGSSRPASGSEHLFSHAIEILGPGSSIHGEQCAMGSLISMYLHGGDWELLKNTYRKIGLNTRAESYGIGREVAIKALSIAHRIRPSRYTILGESDLSYNVAERILSITGII.

Residues 97 to 101 (GSKID) and 119 to 122 (TTPS) each bind NAD(+). Asp124 provides a ligand contact to substrate. Ser128 is a binding site for NAD(+). Asp171 is a binding site for substrate. Residues Asp171 and His251 each coordinate Zn(2+). Residue His255 coordinates substrate. Position 267 (His267) interacts with Zn(2+).

It belongs to the glycerol-1-phosphate dehydrogenase family. It depends on Zn(2+) as a cofactor.

The protein resides in the cytoplasm. It catalyses the reaction sn-glycerol 1-phosphate + NAD(+) = dihydroxyacetone phosphate + NADH + H(+). The catalysed reaction is sn-glycerol 1-phosphate + NADP(+) = dihydroxyacetone phosphate + NADPH + H(+). It participates in membrane lipid metabolism; glycerophospholipid metabolism. In terms of biological role, catalyzes the NAD(P)H-dependent reduction of dihydroxyacetonephosphate (DHAP or glycerone phosphate) to glycerol 1-phosphate (G1P). The G1P thus generated is used as the glycerophosphate backbone of phospholipids in the cellular membranes of Archaea. The protein is Glycerol-1-phosphate dehydrogenase [NAD(P)+] of Picrophilus torridus (strain ATCC 700027 / DSM 9790 / JCM 10055 / NBRC 100828 / KAW 2/3).